The chain runs to 123 residues: Venom peptide MmKTx1 (123 aa).

The first 21 residues, 1–21 (MSIKISAIALFMLSFTVFVNG), serve as a signal peptide directing secretion.

The protein belongs to the scorpion La1-like peptide family. Contains 4 disulfide bonds. Expressed by the venom gland.

The protein localises to the secreted. This Olivierus martensii (Manchurian scorpion) protein is Venom peptide MmKTx1.